The sequence spans 282 residues: NADPH-dependent 7-cyano-7-deazaguanine reductase (282 aa).

Residue isoleucine 88–serine 90 coordinates substrate. Residue serine 90–lysine 91 coordinates NADPH. The Thioimide intermediate role is filled by cysteine 190. The Proton donor role is filled by aspartate 197. Position 229 to 230 (histidine 229 to glutamate 230) interacts with substrate. Arginine 258–glycine 259 contacts NADPH.

This sequence belongs to the GTP cyclohydrolase I family. QueF type 2 subfamily. As to quaternary structure, homodimer.

It localises to the cytoplasm. It catalyses the reaction 7-aminomethyl-7-carbaguanine + 2 NADP(+) = 7-cyano-7-deazaguanine + 2 NADPH + 3 H(+). The protein operates within tRNA modification; tRNA-queuosine biosynthesis. Its function is as follows. Catalyzes the NADPH-dependent reduction of 7-cyano-7-deazaguanine (preQ0) to 7-aminomethyl-7-deazaguanine (preQ1). This chain is NADPH-dependent 7-cyano-7-deazaguanine reductase, found in Shigella flexneri serotype 5b (strain 8401).